The sequence spans 555 residues: MIHAFIKKGCFQDSVSLMIISRKLSESENVDDVSVMMGTPANKALLDTTGFWHDDFNNATPNDICVAIRSEAADAGIAQAIMQQLEEALKQLAQGSGSSQALTQVRRWDSACQKLPDANLALISVAGEYAAELANQALDRNLNVMMFSDNVTLEDEIQLKTRAREKGLLVMGPDCGTSMIAGTPLAFANVMPEGNIGVIGASGTGIQELCSQIALAGEGITHAIGLGGRDLSREVGGISALTALEMLSADEKSEVLAFVSKPPAEAVRLKIVNAMKATGKPTVALFLGYTPAVARDENVWFASSLDEAARLACLLSRVTARRNAIAPVSSGFICGLYTGGTLAAEAAGLLAGHLGVEADDTHQHGMMLDADSHQIIDLGDDFYTVGRPHPMIDPTLRNQLIADLGAKPQVRVLLLDVVIGFGATADPAASLVSAWQKACAARLDNQPLYAIATVTGTERDPQCRSQQIATLEDAGIAVVSSLPEATLLAAALIHPLSPAAQQHTPSLLENVAVINIGLRSFALELQSASKPVVHYQWSPVAGGNKKLARLLERLQ.

This sequence belongs to the AllF family. The OXTCase is composed of 3 subunits, AllF, AllG and AllH. Mg(2+) serves as cofactor.

The catalysed reaction is oxamate + carbamoyl phosphate = N-carbamoyl-2-oxoglycine + phosphate. The protein operates within nitrogen metabolism; (S)-allantoin degradation. In terms of biological role, component of a carbamoyltransferase involved in the anaerobic nitrogen utilization via the assimilation of allantoin. Catalyzes the conversion of oxalurate (N-carbamoyl-2-oxoglycine) to oxamate and carbamoyl phosphate. The chain is Oxamate carbamoyltransferase subunit AllF from Escherichia coli (strain K12).